A 214-amino-acid chain; its full sequence is Ribosomal RNA small subunit methyltransferase G (214 aa).

S-adenosyl-L-methionine-binding positions include Gly-81, Met-86, 132-133, and Arg-147; that span reads VE.

The protein belongs to the methyltransferase superfamily. RNA methyltransferase RsmG family.

Its subcellular location is the cytoplasm. It catalyses the reaction guanosine(527) in 16S rRNA + S-adenosyl-L-methionine = N(7)-methylguanosine(527) in 16S rRNA + S-adenosyl-L-homocysteine. In terms of biological role, specifically methylates the N7 position of guanine in position 527 of 16S rRNA. In Pseudomonas aeruginosa (strain UCBPP-PA14), this protein is Ribosomal RNA small subunit methyltransferase G.